The sequence spans 361 residues: MTSAIGFEGFEKRLEISFFNPGPSVDPVARGLRSLTKNQLDKFLAPAECTIVSSLSNDLLDSYVLSESSLFVYPYKIIIKTCGTTKLLLSIPHILELSGELSLTVQSVRYTRGSFIFPGAQTFPHRSFTEEVMVLDSHFGKLGMCSNAYVMGGAEKDQKWHVYSASAESANLVTQTAPVYTLEMSMTGLSKRNASVFFKSESSSAAVMTEDSGIRKILPESQICDFDFDPCGYSMNAIEGDAISTIHVTPEDGFSYASFEAVGYDFKSMGLTVLIERVLACFEPSEFSVALHGNENVVKDLNLENNDVNVKGYNVEETKFEVLGGEGGSMVYYGFARGGSSCGSPRSTLHRCWSETENEEE.

Active-site residues include Glu8 and Glu11. Ser68 (schiff-base intermediate with substrate; via pyruvic acid) is an active-site residue. Ser68 bears the Pyruvic acid (Ser); by autocatalysis mark. Cys82 serves as the catalytic Proton donor; for catalytic activity. Residues Ser234 and His247 each act as proton acceptor; for processing activity in the active site. Residues 341–361 are disordered; sequence SCGSPRSTLHRCWSETENEEE.

This sequence belongs to the eukaryotic AdoMetDC family. Pyruvate is required as a cofactor. Is synthesized initially as an inactive proenzyme. Formation of the active enzyme involves a self-maturation process in which the active site pyruvoyl group is generated from an internal serine residue via an autocatalytic post-translational modification. Two non-identical subunits are generated from the proenzyme in this reaction, and the pyruvate is formed at the N-terminus of the alpha chain, which is derived from the carboxyl end of the proenzyme. The post-translation cleavage follows an unusual pathway, termed non-hydrolytic serinolysis, in which the side chain hydroxyl group of the serine supplies its oxygen atom to form the C-terminus of the beta chain, while the remainder of the serine residue undergoes an oxidative deamination to produce ammonia and the pyruvoyl group blocking the N-terminus of the alpha chain.

It catalyses the reaction S-adenosyl-L-methionine + H(+) = S-adenosyl 3-(methylsulfanyl)propylamine + CO2. The protein operates within amine and polyamine biosynthesis; S-adenosylmethioninamine biosynthesis; S-adenosylmethioninamine from S-adenosyl-L-methionine: step 1/1. The sequence is that of S-adenosylmethionine decarboxylase proenzyme (SAMDC) from Helianthus annuus (Common sunflower).